Reading from the N-terminus, the 1047-residue chain is Ubiquitin carboxyl-terminal hydrolase 28 (1047 aa).

2 disordered regions span residues 60-95 (DQEPVQNTAAAEPSSWEGSAVGKEPPQGGAAFDPEK) and 110-138 (SPKAHAAERPQEVHSPEHKNRSKRKRCEV). A UIM domain is found at 94–113 (EKKGDVHSAVAYGQLESPKA). Positions 111–128 (PKAHAAERPQEVHSPEHK) are enriched in basic and acidic residues. The region spanning 156–651 (VGMKNIGNTC…SAYCLMYISD (496 aa)) is the USP domain. Residue C165 is the Nucleophile of the active site. A compositionally biased stretch (polar residues) spans 461–486 (STEDSQMMDRQSQGESLILGTPSQPD). Residues 461-528 (STEDSQMMDR…SEPPAEMSDC (68 aa)) form a disordered region. Positions 489–498 (LDGKDGKPED) are enriched in basic and acidic residues. Residues 504–516 (ANSSPQQQLNAPL) show a composition bias toward polar residues. The Proton acceptor role is filled by H601. A disordered region spans residues 694-735 (EAEEWEEEQSCKIPSTASESQELSPESGLDPPAAHEQSLRSL). The span at 705–717 (KIPSTASESQELS) shows a compositional bias: polar residues.

The protein belongs to the peptidase C19 family. USP28 subfamily.

It is found in the nucleus. The protein localises to the nucleoplasm. It catalyses the reaction Thiol-dependent hydrolysis of ester, thioester, amide, peptide and isopeptide bonds formed by the C-terminal Gly of ubiquitin (a 76-residue protein attached to proteins as an intracellular targeting signal).. Functionally, deubiquitinase involved in DNA damage response checkpoint and MYC proto-oncogene stability. Involved in DNA damage induced apoptosis by specifically deubiquitinating proteins of the DNA damage pathway such as CLSPN. Also involved in G2 DNA damage checkpoint, by deubiquitinating CLSPN, and preventing its degradation by the anaphase promoting complex/cyclosome (APC/C). Specifically deubiquitinates MYC in the nucleoplasm, leading to prevent MYC degradation by the proteasome. Deubiquitinates ZNF304, hence may prevent ZNF304 degradation by the proteasome, leading to the activated KRAS-mediated promoter hypermethylation and transcriptional silencing of tumor suppressor genes (TSGs). The polypeptide is Ubiquitin carboxyl-terminal hydrolase 28 (USP28) (Gallus gallus (Chicken)).